Consider the following 764-residue polypeptide: Protective antigen (764 aa).

The signal sequence occupies residues 1–29; the sequence is MKKRKVLIPLMALSTILVSSTGNLEVIQA. The domain 1, calcium-binding; LF and EF binding sites stretch occupies residues 30–287; it reads EVKQENRLLN…PEARHPLVAA (258 aa). Residues 43 to 179 enclose the PA14 domain; that stretch reads SSSQGLLGYY…NKKEVISSDN (137 aa). A disordered region spans residues 176–214; it reads SSDNLQLPELKQKSSNSRKKRSTSAGPTVPDRDNDGIPD. Residues Asp206, Asp208, Asp210, Ile212, and Glu217 each coordinate Ca(2+). Residues 231–239 form an alpha-clamp region; it reads FLSPWISNI. Residues Ser251, Lys254, and Asp264 each coordinate Ca(2+). The tract at residues 288 to 516 is domain 2, membrane insertion and heptamerization; it reads YPIVHVDMEN…SEVLPQIQET (229 aa). The segment at 302–333 is disordered; that stretch reads KNEDQSTQNTDSQTRTISKNTSTSRTHTSEVH. A compositionally biased stretch (polar residues) spans 306-327; that stretch reads QSTQNTDSQTRTISKNTSTSRT. 2 beta stranded membrane-spanning segments follow: residues 331–342 and 345–354; these read EVHGNAEVHASF and IGGSVSAGFS. The domain 3, heptamerization stretch occupies residues 517–624; it reads TARIIFNGKD…KMNILIRDKR (108 aa). The domain 4, binding to the receptor stretch occupies residues 625 to 764; it reads FHYDRNNIAV…IFSKKGYEIG (140 aa).

The protein belongs to the bacterial binary toxin family. In terms of assembly, interacts with host ANTXR1 and ANTXR2. Homooligomer; homooligomerizes to form homoheptamers (PA-63(7)) or homooctamers (PA-63(8)). PA-63(7) or PA-63(8) form ring-shaped oligomers that are in a pre-pore conformation, which do not penetrate the host membrane. PA-63(8) displays an enhanced stability, suggesting that this form circulates in the blood to reach and exert toxicity even in distant tissues. Interacts with lethal factor (LF) and edema factor (EF); can bind LF and EF simultaneously and interaction takes place following homooligomerization on the host cell membrane. PA-63(7) homoheptamer interacts with three molecules of LF to form the PA(7)LF(3) complex, in which the relative position of the N-terminal alpha-helices in the three LFs determines which factor is translocated first. Post-translationally, proteolytic activation by FURIN cleaves the protein in two parts, PA-20 and PA-63; the latter is the mature protein. The cleavage occurs at the cell surface and probably in the serum of infected animals as well; both native and cleaved PA are able to bind to the cell receptor. The release of PA-20 from the remaining receptor-bound PA-63 exposes the binding site for EF and LF, and promotes oligomerization and internalization of the protein.

Its subcellular location is the secreted. It is found in the host cell membrane. The protein localises to the host endosome membrane. Functionally, protective antigen constitutes one of the three proteins composing the anthrax toxin; it mediates attachment to host cells and translocation of edema factor (EF) and lethal factor (LF) into the host cytoplasm. PA associated with LF forms the lethal toxin (LeTx) and causes death when injected; PA associated with EF forms the edema toxin (EdTx) and produces edema. PA induces immunity to infection with anthrax. Its function is as follows. Mediates the attachment to host cells by binding host cell receptors ANTXR1 and ANTXR2. Following host cell surface attachment, PA is cleaved by FURIN to generate the PA-63 (Protective antigen PA-63) form, which constitutes the mature form of the protein that oligomerizes and forms a pore to translocate the enzymatic toxin components edema factor (EF) and lethal factor (LF) into the host cytosol. In terms of biological role, mature form that oligomerizes and forms a pore to translocate the enzymatic toxin components edema factor (EF) and lethal factor (LF) into the host cytosol. Following attachment to host cell receptors and cleavage by FURIN, homooligomerizes to form ring-shaped oligomers that are in a pre-pore conformation, and associates with EF and LF. Toxin-leaded complexes are then endocytosed in a clathrin-dependent process, followed by a conformational change of oligomerized PA-63 from the pre-pore to pore state, which is triggered by the low pH in the endosome. Once active, the pore mediates unfolding of EF and LF, which pass through the pore and translocate into the host cytosol. In Bacillus anthracis, this protein is Protective antigen (pagA).